A 219-amino-acid chain; its full sequence is Cytidylate kinase (219 aa).

Residue 21–29 (GPAASGKGT) participates in ATP binding.

The protein belongs to the cytidylate kinase family. Type 1 subfamily.

Its subcellular location is the cytoplasm. It catalyses the reaction CMP + ATP = CDP + ADP. The catalysed reaction is dCMP + ATP = dCDP + ADP. The sequence is that of Cytidylate kinase from Rickettsia typhi (strain ATCC VR-144 / Wilmington).